Reading from the N-terminus, the 227-residue chain is Protein lin-28 (227 aa).

Positions 1–17 are enriched in polar residues; it reads MSTVVSEGRNDGNNRYS. Residues 1-27 are disordered; sequence MSTVVSEGRNDGNNRYSPQDEVEDRLP. The CSD domain maps to 52 to 120; sequence RYFGSCKWFN…GREAYAVSGE (69 aa). 2 CCHC-type zinc fingers span residues 143–160 and 166–183; these read RCFR…SCPN and KVCY…ICPE. Zn(2+)-binding residues include C144, C147, H153, C158, C168, C171, H176, and C181. Residues 181-227 form a disordered region; that stretch reads CPERRRKHRPEQVAAEEAEAARMAAEKSSPTTSDDDIREKNSNSSDE.

It belongs to the lin-28 family. Component of a complex at least containing lep-2, lin-28 and the long non-coding RNA lep-5, which mediates the degradation of lin-28. Post-translationally, cleavage by caspase ced-3 during larval development probably induces lin-28 degradation.

The protein resides in the cytoplasm. In terms of biological role, heterochronic protein which controls the choice of stage specific cell fates. Regulates the timing of the second larval stage events (L2 events) in the hypodermis. May negatively regulate the larval to adult transition via the suppression of the microRNA (miRNA) let-7 during L3. Through this regulatory role, controls the timing of the sexual maturation of the nervous system. Also has a role in the fox-1-sex-1-mediated determination of sexual fate. Plays a role in governing the developmental timing of male tail tip morphogenesis. Plays a role in controlling the seam cell number during larval stages. Plays a role in vulval development. The sequence is that of Protein lin-28 from Caenorhabditis elegans.